The sequence spans 429 residues: UDP-N-acetylglucosamine 1-carboxyvinyltransferase (429 aa).

Lys22–Asn23 contributes to the phosphoenolpyruvate binding site. A UDP-N-acetyl-alpha-D-glucosamine-binding site is contributed by Arg102. Cys126 (proton donor) is an active-site residue. Cys126 is modified (2-(S-cysteinyl)pyruvic acid O-phosphothioketal). Asp316 and Ile338 together coordinate UDP-N-acetyl-alpha-D-glucosamine.

This sequence belongs to the EPSP synthase family. MurA subfamily.

Its subcellular location is the cytoplasm. The catalysed reaction is phosphoenolpyruvate + UDP-N-acetyl-alpha-D-glucosamine = UDP-N-acetyl-3-O-(1-carboxyvinyl)-alpha-D-glucosamine + phosphate. Its pathway is cell wall biogenesis; peptidoglycan biosynthesis. Its function is as follows. Cell wall formation. Adds enolpyruvyl to UDP-N-acetylglucosamine. This is UDP-N-acetylglucosamine 1-carboxyvinyltransferase from Methylorubrum extorquens (strain PA1) (Methylobacterium extorquens).